Reading from the N-terminus, the 627-residue chain is Siderophore iron transporter ARN1 (627 aa).

The Extracellular segment spans residues 1-70 (MESVHSRDPV…TEIIGSAYNK (70 aa)). Residues 71 to 91 (WYLQAILLLSAFICGYGYGLD) form a helical membrane-spanning segment. The Cytoplasmic segment spans residues 92 to 110 (GNIRYIYTGYATSSYSEHS). The chain crosses the membrane as a helical span at residues 111 to 131 (LLSTINVINAVVSAASQIIYA). Residues 132 to 135 (RLSD) are Extracellular-facing. Residues 136–156 (VFGRLYLFISAVILYVVGTII) traverse the membrane as a helical segment. Topologically, residues 157 to 167 (QSQAYDVQRYA) are cytoplasmic. Residues 168–188 (AGAIFYNAGYVGVILILLIIL) traverse the membrane as a helical segment. Topologically, residues 189–197 (SDFSSLKWR) are extracellular. Residues 198-218 (LLYQFVPTWPFIINTWIAGNI) traverse the membrane as a helical segment. The Cytoplasmic portion of the chain corresponds to 219-231 (TSRANPVVNWSWD). The helical transmembrane segment at 232–252 (VGMWAFIFPLSCVPIVLCMLH) threads the bilayer. Over 253-290 (MQWRARKTPEWHALKGQKSYYQEHGFIKILKQLFWMLD) the chain is Extracellular. Residues 291 to 311 (VVGVLLMGCSLGCILVPLTLA) form a helical membrane-spanning segment. The Cytoplasmic segment spans residues 312–323 (GGVKTTWNDSRL). Residues 324–344 (IGPFVLGFVLIPILWIWEYRF) form a helical membrane-spanning segment. Topologically, residues 345–367 (ARDPILPYRLVKDRAVWSSMGIS) are extracellular. A helical membrane pass occupies residues 368–388 (FLIDFIYYMAADYLYTVMIVA). Topologically, residues 389 to 398 (VNESVKSATR) are cytoplasmic. A helical transmembrane segment spans residues 399–419 (IATLSSFVSTVASPFFALLVT). The Extracellular segment spans residues 420–424 (RCTRL). Residues 425-445 (KPFIMFGCALWMVAMGLLYHF) traverse the membrane as a helical segment. The Cytoplasmic segment spans residues 446–454 (RGGSQSHSG). Residues 455–475 (IIGALCVWGVGTTLFTYPVTV) traverse the membrane as a helical segment. The Extracellular portion of the chain corresponds to 476–563 (SVQSAVSHEN…LMNAYKYVQR (88 aa)). Residues 564–584 (LETIVALVFCVPLIAFSLCLR) form a helical membrane-spanning segment. Over 585-627 (DPKLTDTVAVEYIEDGEYVDTKDNDPILDWFEKLPSKFTFKRE) the chain is Cytoplasmic.

This sequence belongs to the major facilitator superfamily.

The protein localises to the cell membrane. Its subcellular location is the endosome membrane. Functionally, involved in the transport of siderophore ferrichrome and so has a role in iron homeostasis. The polypeptide is Siderophore iron transporter ARN1 (ARN1) (Saccharomyces cerevisiae (strain ATCC 204508 / S288c) (Baker's yeast)).